Here is a 46-residue protein sequence, read N- to C-terminus: Large ribosomal subunit protein bL34c (46 aa).

Residues 1–46 are disordered; that stretch reads MSKRTLEGSHRKKVRKSGFLSRSQSPTGRRILKARRKKGRKMLVKY. Basic residues predominate over residues 30–46; it reads RILKARRKKGRKMLVKY.

The protein belongs to the bacterial ribosomal protein bL34 family.

The protein localises to the plastid. The protein resides in the cyanelle. In Cyanophora paradoxa, this protein is Large ribosomal subunit protein bL34c (rpl34).